The sequence spans 231 residues: Large ribosomal subunit protein uL1 (231 aa).

The protein belongs to the universal ribosomal protein uL1 family. As to quaternary structure, part of the 50S ribosomal subunit.

In terms of biological role, binds directly to 23S rRNA. The L1 stalk is quite mobile in the ribosome, and is involved in E site tRNA release. Its function is as follows. Protein L1 is also a translational repressor protein, it controls the translation of the L11 operon by binding to its mRNA. This is Large ribosomal subunit protein uL1 from Pseudomonas entomophila (strain L48).